The sequence spans 1123 residues: Nicotinic receptor-associated protein 4 (1123 aa).

The first 18 residues, 1-18 (MGSLPLILLSLLLPGALA), serve as a signal peptide directing secretion. Residues 19–1071 (NVYSCAGSVK…TSSKRANDVD (1053 aa)) lie on the Lumenal side of the membrane. The chain crosses the membrane as a helical span at residues 1072–1092 (ISVGTFLSLPFFVTLALVFFN). Residues 1093–1123 (QNRVLELLGTFIDWARNTFAPTADNHHRKRK) lie on the Cytoplasmic side of the membrane.

May interact with nra-2 in the ER. Expressed in body wall, pharyngeal, uterine and vulval muscles, motor neurons, nerve ring, motor and ventral cord neurons, hypodermal cells in the tail, vulval epithelium and intestine.

The protein resides in the endoplasmic reticulum membrane. Involved in the recognition and selection of protein complexes to exit the endoplasmic reticulum (ER). In muscles, regulates levamisole-sensitive nicotinic acetylcholine receptor (L-AChR) subunit composition, possibly by allowing only specific L-AChR subunit combinations to exit the ER. Specifically, may promote the inclusion of alpha subunit unc-38 into and the exclusion of unc-29 from L-AChR. Regulates L-AChR sensitivity to agonists such as nicotine and levamisole at neuro-muscular junctions. The sequence is that of Nicotinic receptor-associated protein 4 from Caenorhabditis elegans.